A 157-amino-acid polypeptide reads, in one-letter code: Protein FAM162B (157 aa).

A helical transmembrane segment spans residues 104–123 (ACYIMIGLTIVACFAVIVSA).

The protein belongs to the UPF0389 family.

The protein resides in the membrane. The polypeptide is Protein FAM162B (Fam162b) (Mus musculus (Mouse)).